The primary structure comprises 473 residues: PPE family protein PPE37 (473 aa).

Residues 203–206 (DFLE) carry the Iron-binding motif motif. 2 helical membrane-spanning segments follow: residues 227-247 (VLDWFISFVSGPVFTFLAYLV) and 250-270 (PLIYFGPFAPLTSPVLLPAGL).

The protein belongs to the mycobacterial PPE family.

It localises to the cell membrane. Functionally, essential for efficient heme-iron acquisition (HIA). Binds iron. Strains with a functional PPE37 can utilize low concentrations of hemin very efficiently in broth and on agar plates. During infection, might interfere with the pro-inflammatory cytokine response in infected macrophages. In vitro, incubation of the protein in the presence of M.tuberculosis proteases leads to the cleavage of PPE37 into two segments, the N- and C-terminal segments. Transfection of human monocytic THP-1 cell lines with the N-terminal segment leads to the proliferation and differentiation of THP-1 cells into adherent stellate cells with dendritic cell-like morphology. Transfection of THP-1 cells with the C-terminal segment leads to the apoptosis of the cells. Recombinant protein antigens display strong B-cell response in tuberculosis patients and immunized mice. The polypeptide is PPE family protein PPE37 (Mycobacterium tuberculosis (strain ATCC 25618 / H37Rv)).